The sequence spans 227 residues: Cytochrome c oxidase subunit 2 (227 aa).

Residues 1-14 (MAYPFQLGLQDATS) are Mitochondrial intermembrane-facing. The chain crosses the membrane as a helical span at residues 15–45 (PIMEELMNFHDHTLMIVFLISSLVLYIISLM). Over 46–59 (LTTKLTHTSTMDAQ) the chain is Mitochondrial matrix. A helical transmembrane segment spans residues 60 to 87 (EVETIWTILPAVILILIALPSLRILYMM). The Mitochondrial intermembrane portion of the chain corresponds to 88–227 (DEINNPVLTV…NFENWSASMI (140 aa)). Cu cation contacts are provided by H161, C196, E198, C200, H204, and M207. Position 198 (E198) interacts with Mg(2+).

Belongs to the cytochrome c oxidase subunit 2 family. Component of the cytochrome c oxidase (complex IV, CIV), a multisubunit enzyme composed of 14 subunits. The complex is composed of a catalytic core of 3 subunits MT-CO1, MT-CO2 and MT-CO3, encoded in the mitochondrial DNA, and 11 supernumerary subunits COX4I, COX5A, COX5B, COX6A, COX6B, COX6C, COX7A, COX7B, COX7C, COX8 and NDUFA4, which are encoded in the nuclear genome. The complex exists as a monomer or a dimer and forms supercomplexes (SCs) in the inner mitochondrial membrane with NADH-ubiquinone oxidoreductase (complex I, CI) and ubiquinol-cytochrome c oxidoreductase (cytochrome b-c1 complex, complex III, CIII), resulting in different assemblies (supercomplex SCI(1)III(2)IV(1) and megacomplex MCI(2)III(2)IV(2)). Found in a complex with TMEM177, COA6, COX18, COX20, SCO1 and SCO2. Interacts with TMEM177 in a COX20-dependent manner. Interacts with COX20. Interacts with COX16. Cu cation is required as a cofactor.

It localises to the mitochondrion inner membrane. It carries out the reaction 4 Fe(II)-[cytochrome c] + O2 + 8 H(+)(in) = 4 Fe(III)-[cytochrome c] + 2 H2O + 4 H(+)(out). In terms of biological role, component of the cytochrome c oxidase, the last enzyme in the mitochondrial electron transport chain which drives oxidative phosphorylation. The respiratory chain contains 3 multisubunit complexes succinate dehydrogenase (complex II, CII), ubiquinol-cytochrome c oxidoreductase (cytochrome b-c1 complex, complex III, CIII) and cytochrome c oxidase (complex IV, CIV), that cooperate to transfer electrons derived from NADH and succinate to molecular oxygen, creating an electrochemical gradient over the inner membrane that drives transmembrane transport and the ATP synthase. Cytochrome c oxidase is the component of the respiratory chain that catalyzes the reduction of oxygen to water. Electrons originating from reduced cytochrome c in the intermembrane space (IMS) are transferred via the dinuclear copper A center (CU(A)) of subunit 2 and heme A of subunit 1 to the active site in subunit 1, a binuclear center (BNC) formed by heme A3 and copper B (CU(B)). The BNC reduces molecular oxygen to 2 water molecules using 4 electrons from cytochrome c in the IMS and 4 protons from the mitochondrial matrix. The sequence is that of Cytochrome c oxidase subunit 2 (MT-CO2) from Maxomys bartelsii (Bartels's Javan maxomys).